The following is a 158-amino-acid chain: Small ribosomal subunit protein uS7 (158 aa).

Belongs to the universal ribosomal protein uS7 family. Part of the 30S ribosomal subunit. Contacts proteins S9 and S11.

In terms of biological role, one of the primary rRNA binding proteins, it binds directly to 16S rRNA where it nucleates assembly of the head domain of the 30S subunit. Is located at the subunit interface close to the decoding center, probably blocks exit of the E-site tRNA. This Bacteroides fragilis (strain YCH46) protein is Small ribosomal subunit protein uS7.